The following is a 169-amino-acid chain: MHVETLVIEPLTKEAFAPFGDVIETEGAELRLINNGTTERYHDLARVEAAGTEARVLVNIFRGQSFEAPIDIVMMERHPFGSQAFIPLNGRPFLVVVAEDDGGKPARLRVFLAHGNQGVNYLRNVWHHPLLALEQKSDFLIVDRAGKEDNLEEFFFSDTTYRIETTKPA.

Belongs to the ureidoglycolate lyase family. In terms of assembly, homodimer. Requires Ni(2+) as cofactor.

The enzyme catalyses (S)-ureidoglycolate = urea + glyoxylate. Its pathway is nitrogen metabolism; (S)-allantoin degradation. Functionally, catalyzes the catabolism of the allantoin degradation intermediate (S)-ureidoglycolate, generating urea and glyoxylate. Involved in the utilization of allantoin as nitrogen source. In Brucella anthropi (strain ATCC 49188 / DSM 6882 / CCUG 24695 / JCM 21032 / LMG 3331 / NBRC 15819 / NCTC 12168 / Alc 37) (Ochrobactrum anthropi), this protein is Ureidoglycolate lyase.